A 153-amino-acid chain; its full sequence is Ribosome maturation factor RimP (153 aa).

The protein belongs to the RimP family.

It is found in the cytoplasm. Functionally, required for maturation of 30S ribosomal subunits. The polypeptide is Ribosome maturation factor RimP (Clostridioides difficile (strain 630) (Peptoclostridium difficile)).